Consider the following 567-residue polypeptide: Phosphoglucomutase-like protein 5 (567 aa).

The tract at residues 1–26 is disordered; it reads MEGSPIPVLTVPTAPYEDQRPAGGGG. Threonine 120 is subject to Phosphothreonine. At serine 122 the chain carries Phosphoserine.

The protein belongs to the phosphohexose mutase family. As to quaternary structure, interacts with DMD/dystrophin; the interaction is direct. Interacts with UTRN/utrophin. Detected in smooth and cardiac muscle at high levels and in skeletal muscle at low level. Present in other tissues due to vascular or other smooth muscle component. Low levels are present in liver, kidney, skin and brain (at protein level).

The protein resides in the cell junction. It is found in the adherens junction. Its subcellular location is the cytoplasm. The protein localises to the cytoskeleton. It localises to the cell membrane. The protein resides in the sarcolemma. Component of adherens-type cell-cell and cell-matrix junctions. Has no phosphoglucomutase activity in vitro. The protein is Phosphoglucomutase-like protein 5 of Homo sapiens (Human).